Consider the following 545-residue polypeptide: Chaperonin GroEL 1 (545 aa).

Residues 30 to 33, lysine 51, 87 to 91, glycine 415, 479 to 481, and aspartate 495 contribute to the ATP site; these read TLGP, DGTTT, and NAA.

Belongs to the chaperonin (HSP60) family. In terms of assembly, forms a cylinder of 14 subunits composed of two heptameric rings stacked back-to-back. Interacts with the co-chaperonin GroES.

It is found in the cytoplasm. The catalysed reaction is ATP + H2O + a folded polypeptide = ADP + phosphate + an unfolded polypeptide.. Functionally, together with its co-chaperonin GroES, plays an essential role in assisting protein folding. The GroEL-GroES system forms a nano-cage that allows encapsulation of the non-native substrate proteins and provides a physical environment optimized to promote and accelerate protein folding. The protein is Chaperonin GroEL 1 of Methylococcus capsulatus (strain ATCC 33009 / NCIMB 11132 / Bath).